Here is a 226-residue protein sequence, read N- to C-terminus: UPF0758 protein SPs0978 (226 aa).

The MPN domain maps to 103–225 (SVLTSVQVAE…YYSFREKSTL (123 aa)). 3 residues coordinate Zn(2+): His-174, His-176, and Asp-187. Residues 174 to 187 (HNHPSGNIEPSSND) carry the JAMM motif motif.

This sequence belongs to the UPF0758 family.

This Streptococcus pyogenes serotype M3 (strain SSI-1) protein is UPF0758 protein SPs0978.